The following is a 222-amino-acid chain: Probable nicotinate-nucleotide adenylyltransferase (222 aa).

The protein belongs to the NadD family.

The enzyme catalyses nicotinate beta-D-ribonucleotide + ATP + H(+) = deamido-NAD(+) + diphosphate. The protein operates within cofactor biosynthesis; NAD(+) biosynthesis; deamido-NAD(+) from nicotinate D-ribonucleotide: step 1/1. Catalyzes the reversible adenylation of nicotinate mononucleotide (NaMN) to nicotinic acid adenine dinucleotide (NaAD). This is Probable nicotinate-nucleotide adenylyltransferase from Xylella fastidiosa (strain M23).